The chain runs to 62 residues: Large ribosomal subunit protein bL28 (62 aa).

This sequence belongs to the bacterial ribosomal protein bL28 family.

In Caldicellulosiruptor bescii (strain ATCC BAA-1888 / DSM 6725 / KCTC 15123 / Z-1320) (Anaerocellum thermophilum), this protein is Large ribosomal subunit protein bL28.